The following is a 399-amino-acid chain: Homoserine O-acetyltransferase (399 aa).

The AB hydrolase-1 domain occupies 63-372 (NAILVCHALT…TDRGHDAFLL (310 aa)). Residue Ser168 is the Nucleophile of the active site. Arg238 is a binding site for substrate. Residues Asp334 and His367 contribute to the active site. Substrate is bound at residue Asp368.

It belongs to the AB hydrolase superfamily. MetX family. Homodimer.

The protein resides in the cytoplasm. The enzyme catalyses L-homoserine + acetyl-CoA = O-acetyl-L-homoserine + CoA. It participates in amino-acid biosynthesis; L-methionine biosynthesis via de novo pathway; O-acetyl-L-homoserine from L-homoserine: step 1/1. Functionally, transfers an acetyl group from acetyl-CoA to L-homoserine, forming acetyl-L-homoserine. This chain is Homoserine O-acetyltransferase, found in Nitrobacter hamburgensis (strain DSM 10229 / NCIMB 13809 / X14).